A 400-amino-acid polypeptide reads, in one-letter code: Iron(III) enterobactin esterase (400 aa).

Belongs to the Fes family.

The protein localises to the cytoplasm. It catalyses the reaction Fe(III)-enterobactin + 3 H2O + H(+) = Fe(III)-[N-(2,3-dihydroxybenzoyl)-L-serine] + 2 N-(2,3-dihydroxybenzoyl)-L-serine. The catalysed reaction is Fe(III)-enterobactin + H2O = Fe(III)-[N-(2,3-dihydroxybenzoyl)-L-serine]3 + H(+). The enzyme catalyses Fe(III)-[N-(2,3-dihydroxybenzoyl)-L-serine]3 + H2O + H(+) = Fe(III)-[N-(2,3-dihydroxybenzoyl)-L-serine]2 + N-(2,3-dihydroxybenzoyl)-L-serine. It carries out the reaction Fe(III)-[N-(2,3-dihydroxybenzoyl)-L-serine]2 + H2O + H(+) = Fe(III)-[N-(2,3-dihydroxybenzoyl)-L-serine] + N-(2,3-dihydroxybenzoyl)-L-serine. It catalyses the reaction enterobactin + 3 H2O = 3 N-(2,3-dihydroxybenzoyl)-L-serine + 2 H(+). In terms of biological role, catalyzes the hydrolysis of ferric enterobactin (Fe-Ent). Is responsible for the release of iron from ferric enterobactin. Also catalyzes the hydrolysis of iron-free enterobactin (Ent). Hydrolyzes ferric monoglucosyl-C-Ent (Fe-MGE) poorly and does not hydrolyze ferric diglucosyl-C-Ent (Fe-DGE) or ferric triglucosyl-C-Ent (Fe-TGE) at all. Also hydrolyzes apo MGE, but catalyzes the hydrolysis of apo DGE very poorly, and does not process apo TGE at all. The catalytic efficiency for processing Fe-Ent is much higher than that for apo Ent, suggesting that Fe-Ent is the physiological substrate. This is Iron(III) enterobactin esterase from Escherichia coli O6:H1 (strain CFT073 / ATCC 700928 / UPEC).